The sequence spans 143 residues: uncharacterized protein (143 aa).

The protein belongs to the OsmC/Ohr family.

This is an uncharacterized protein from Acinetobacter baylyi (strain ATCC 33305 / BD413 / ADP1).